Reading from the N-terminus, the 629-residue chain is MSTTLKNAAHLSESAQVDSGSVQPFTRSQKIYVQGSRPDIRVPMREITLDVTPTDFGGEINAPVTVYDTSGPYTDPNVIIDVRKGLADVRSPWIDSRNDTERLAGLSSNFGQQRLSDAELTALRFAHVRNPRRANAGANVSQMHYARQGIITAEMEYVAIRENMKLQEARAAGLRTQQNAGHSFGASIPKEITAEFVREEIARGRAIIPANINHVELEPMIIGRNFLVKINGNIGNSALGSSIEEEVAKLTWGIRWGSDTVMDLSTGKHIHETREWIIRNSPVPIGTVPIYQALEKVGGAAEDLTWELFRDTLIEQAEQGVDYFTIHAGVLLRYVPLTAKRVTGIVSRGGSIMAKWCLAHHQENFLYTHFEDICEIMKAYDVSFSLGDGLRPGSIADANDAAQFGELETLGELTKIAWKHDVQTMIEGPGHVPMQLIKENMDKQLECCDEAPFYTLGPLTTDIAPGYDHITSGIGAAMIGWFGCAMLCYVTPKEHLGLPNKDDVKTGIITYKIAAHAADLAKGHPGAQIRDNALSKARFEFRWEDQFNLGLDPDTARSYHDETLPKDSAKVAHFCSMCGPKFCSMKITQEVREYAANQRIEAVDVDVAKGLAEQAERFKQEGSQLYKKV.

The tract at residues 1–20 (MSTTLKNAAHLSESAQVDSG) is disordered. Substrate is bound by residues N233, M262, Y291, H327, 347-349 (SRG), 388-391 (DGLR), and E427. H431 lines the Zn(2+) pocket. Y454 is a substrate binding site. Residue H495 participates in Zn(2+) binding. The [4Fe-4S] cluster site is built by C575, C578, and C583.

This sequence belongs to the ThiC family. Homodimer. [4Fe-4S] cluster serves as cofactor.

It carries out the reaction 5-amino-1-(5-phospho-beta-D-ribosyl)imidazole + S-adenosyl-L-methionine = 4-amino-2-methyl-5-(phosphooxymethyl)pyrimidine + CO + 5'-deoxyadenosine + formate + L-methionine + 3 H(+). Its pathway is cofactor biosynthesis; thiamine diphosphate biosynthesis. In terms of biological role, catalyzes the synthesis of the hydroxymethylpyrimidine phosphate (HMP-P) moiety of thiamine from aminoimidazole ribotide (AIR) in a radical S-adenosyl-L-methionine (SAM)-dependent reaction. The polypeptide is Phosphomethylpyrimidine synthase (Pseudomonas savastanoi pv. phaseolicola (strain 1448A / Race 6) (Pseudomonas syringae pv. phaseolicola (strain 1448A / Race 6))).